We begin with the raw amino-acid sequence, 289 residues long: Oxaloacetate decarboxylase (289 aa).

S50 provides a ligand contact to substrate. D88 is a binding site for Mg(2+). Residues R159 and H235 each coordinate substrate.

It belongs to the isocitrate lyase/PEP mutase superfamily. Oxaloacetate decarboxylase family. As to quaternary structure, homotetramer; dimer of dimers. It depends on Mg(2+) as a cofactor.

The enzyme catalyses oxaloacetate + H(+) = pyruvate + CO2. In terms of biological role, catalyzes the decarboxylation of oxaloacetate into pyruvate. Seems to play a role in maintaining cellular concentrations of bicarbonate and pyruvate. In Pseudomonas syringae pv. tomato (strain ATCC BAA-871 / DC3000), this protein is Oxaloacetate decarboxylase.